We begin with the raw amino-acid sequence, 60 residues long: Large ribosomal subunit protein bL32 (60 aa).

The protein belongs to the bacterial ribosomal protein bL32 family.

This chain is Large ribosomal subunit protein bL32, found in Borrelia turicatae (strain 91E135).